Here is a 130-residue protein sequence, read N- to C-terminus: Small ribosomal subunit protein uS8 (130 aa).

The protein belongs to the universal ribosomal protein uS8 family. In terms of assembly, part of the 30S ribosomal subunit. Contacts proteins S5 and S12.

Its function is as follows. One of the primary rRNA binding proteins, it binds directly to 16S rRNA central domain where it helps coordinate assembly of the platform of the 30S subunit. The chain is Small ribosomal subunit protein uS8 from Phytoplasma mali (strain AT).